The sequence spans 217 residues: Tegument protein BKRF4 (217 aa).

The interval 1–217 is disordered; that stretch reads MAMFLKSRGV…GNNNYNWPWL (217 aa). Residues 32–42 show a composition bias toward polar residues; it reads YTLGSQASQSI. Over residues 43 to 79 the composition is skewed to acidic residues; the sequence is QEEDVSDTDESDYSDEDEEIDLEEEYPSDEDPSEGSD. The tract at residues 63-64 is interaction with host histones H3/H4; sequence DL. The interaction with host H2A/H2B stretch occupies residues 81 to 84; it reads DPSW. Acidic residues predominate over residues 89–102; it reads SDESDYSESDEDEA. Over residues 106 to 132 the composition is skewed to low complexity; it reads SQASRSSRVSPSTQQSSGLTPTPSFSR. The span at 136–145 shows a compositional bias: pro residues; sequence RAPPRPPAPA. Residues 208–217 show a composition bias toward polar residues; the sequence is GNNNYNWPWL.

Belongs to the lymphocryptovirus BKRF4 family. Forms a complex with the host H3/H4 dimer and histone chaperone ASF1. Also forms a complex with host H2A/H2B dimer. Interacts (via C-terminus) with BGLF2; this interaction is important for infectious virion production.

Its subcellular location is the virion tegument. The protein localises to the host nucleus. The protein resides in the host cytoplasm. It localises to the host perinuclear region. Histone-binding protein that binds to histones H2A/H2B, H3/H4 and cellular chromatin to overcome the host DNA damage response triggered by the viral genome ends. Interferes with histone ubiquitination and recruitment of repair proteins. The polypeptide is Tegument protein BKRF4 (Epstein-Barr virus (strain AG876) (HHV-4)).